Reading from the N-terminus, the 260-residue chain is Putative ABC transporter ATP-binding protein (260 aa).

The region spanning 4–243 (ISMKNVTLKK…QVLENFYESP (240 aa)) is the ABC transporter domain. 36–43 (GLNGSGKT) is an ATP binding site.

This sequence belongs to the ABC transporter superfamily.

The polypeptide is Putative ABC transporter ATP-binding protein (abcX) (Streptococcus mutans serotype c (strain ATCC 700610 / UA159)).